A 237-amino-acid polypeptide reads, in one-letter code: MAKSRFEYVREYEVHDTLLPETYIVVRIDGKHFHEFSQHYSFEKPNDERALKLMNASAKNVVMAYSGDIILAFGESDEYSFILRKDSTLFRRRRDKLSTLFVSLFTAQYVALWPKFFPEQPLSHKRLPFFDSRCVCYPNTTVVKDYLCWRYVDTHINNLYNTVFWNLVLKCNLTPREAEQRLSGTLSSDKQEILFSECGVNYNNESEMFKKGSLINRKGEIMHIDVVKQIDELFAGF.

Mg(2+) contacts are provided by aspartate 29, glycine 30, and aspartate 77. GTP is bound by residues 29-34 (DGKHFH) and 76-77 (SD).

It belongs to the tRNA(His) guanylyltransferase family. Mg(2+) is required as a cofactor.

It carries out the reaction a 5'-end ribonucleotide-tRNA(His) + GTP + ATP + H2O = a 5'-end phospho-guanosine-ribonucleotide-tRNA(His) + AMP + 2 diphosphate + H(+). Functionally, adds a GMP to the 5'-end of tRNA(His) after transcription and RNase P cleavage. This chain is tRNA(His) guanylyltransferase (THG1), found in Eremothecium gossypii (strain ATCC 10895 / CBS 109.51 / FGSC 9923 / NRRL Y-1056) (Yeast).